The chain runs to 115 residues: Replication initiation control protein YabA (115 aa).

Zn(2+)-binding residues include His86, Cys88, Cys102, and Cys105.

Belongs to the YabA family. As to quaternary structure, homotetramer. Interacts with both DnaA and DnaN, acting as a bridge between these two proteins. Zn(2+) is required as a cofactor.

It localises to the cytoplasm. Its subcellular location is the nucleoid. Its function is as follows. Involved in control of chromosome replication initiation. Inhibits the cooperative binding of DnaA to the oriC region, thus negatively regulating initiation of chromosome replication. Inhibits the ability of DnaA-ATP to form a helix on DNA; does not disassemble preformed DnaA-DNA helices. Decreases the residence time of DnaA on the chromosome at its binding sites (oriC, replication forks and promoter-binding sites). Tethers DnaA to the replication machinery via the DNA polymerase beta sliding clamp subunit (dnaN). Associates with oriC and other DnaA targets on the chromosome in a DnaA-dependent manner. This chain is Replication initiation control protein YabA, found in Enterococcus faecalis (strain ATCC 700802 / V583).